Consider the following 228-residue polypeptide: Cytidylate kinase (228 aa).

ATP is bound at residue 12-20; the sequence is GPSGSGKGT.

It belongs to the cytidylate kinase family. Type 1 subfamily.

The protein resides in the cytoplasm. It carries out the reaction CMP + ATP = CDP + ADP. It catalyses the reaction dCMP + ATP = dCDP + ADP. The protein is Cytidylate kinase of Pseudomonas entomophila (strain L48).